Reading from the N-terminus, the 213-residue chain is MKPIKALTARQQEVFNFLKHHIETTGMPPTRAEISRELGFRSPNAAEEYLKALARKGVVEILSGTSRGIRLLVDTEESANDEDAGLPLIGRVAAGEPILAEQHIEGTYKVDADMFKPQADFLLKVYGQSMKDIGILDGDLLAVHSTKDVRNGQVIVARIEDEVTVKRLERKGDVVYLHAENEEFKPIVVNLKEQPNFEIEGIAVGIIRNNAWM.

A DNA-binding region (H-T-H motif) is located at residues 31 to 51; the sequence is RAEISRELGFRSPNAAEEYLK. Residues Ser129 and Lys166 each act as for autocatalytic cleavage activity in the active site.

This sequence belongs to the peptidase S24 family. As to quaternary structure, homodimer.

It catalyses the reaction Hydrolysis of Ala-|-Gly bond in repressor LexA.. Its function is as follows. Represses a number of genes involved in the response to DNA damage (SOS response), including recA and lexA. In the presence of single-stranded DNA, RecA interacts with LexA causing an autocatalytic cleavage which disrupts the DNA-binding part of LexA, leading to derepression of the SOS regulon and eventually DNA repair. The sequence is that of LexA repressor from Mannheimia succiniciproducens (strain KCTC 0769BP / MBEL55E).